The chain runs to 63 residues: Large ribosomal subunit protein bL28 (63 aa).

This sequence belongs to the bacterial ribosomal protein bL28 family.

The polypeptide is Large ribosomal subunit protein bL28 (Desulfosudis oleivorans (strain DSM 6200 / JCM 39069 / Hxd3) (Desulfococcus oleovorans)).